Here is a 583-residue protein sequence, read N- to C-terminus: MYPEESRGSGGVATVDFLEGLMTMTAPTPAPTPLYSHSTTGCYSAPLDAHGPLSDGSLQSLGSGPTSPLVFVPSSPRLSPFMHPPSHHYLETTSTPVYRSSHQPVPREDQCGTRDEAYSVGELGAGAGGFEITKNTRFCAVCSDYASGYHYGVWSCEGCKAFFKRSIQGHNDYMCPATNQCTIDKNRRKSCQACRLRKCYEVGMMKGGMRKDRGRVLRREKHGPAQRQTSQNLPTHKASPQDGRKRAMSSSSTSGPGGRSSLNNMPPDQVLLLLQGAEPPILCSRQKMSRPYTEVTIMTLLTSMADKELVHMITWAKKLPGFLQLSLHDQVLLLESSWLEVLMIGLIWRSIQCPGKLIFEEDLILDRNEGTCVEGMAEIFDMLLATVRFRVLKLKPEEFVCLKAIILLNSGAFSFCTGTMEPLHDSVAVQHMLDTITDALIFHISHFGCSAQQQSRRQAQLLLLLSHIRHMSNKGMEHLYSMKCKNKVPLYDLLLEMLDAHRIHRPVKPSQSWSQGDRDSPTASSTSSRGGGGGDDEGASSAGSSSGPQGSHESPRRENLSRAPKGPGVLQYRGSHSDCTRIP.

The modulating stretch occupies residues 1–138; it reads MYPEESRGSG…GFEITKNTRF (138 aa). 2 consecutive NR C4-type zinc fingers follow at residues 139–159 and 175–199; these read CAVC…CEGC and CPAT…LRKC. A DNA-binding region (nuclear receptor) is located at residues 139-204; the sequence is CAVCSDYASG…RLRKCYEVGM (66 aa). Residues 205 to 265 form a hinge region; that stretch reads MKGGMRKDRG…PGGRSSLNNM (61 aa). Residues 220-263 form a disordered region; that stretch reads EKHGPAQRQTSQNLPTHKASPQDGRKRAMSSSSTSGPGGRSSLN. Residues 266-501 form the NR LBD domain; the sequence is PPDQVLLLLQ…DLLLEMLDAH (236 aa). The interval 506-583 is disordered; it reads PVKPSQSWSQ…GSHSDCTRIP (78 aa). A compositionally biased stretch (low complexity) spans 539–551; the sequence is ASSAGSSSGPQGS.

It belongs to the nuclear hormone receptor family. NR3 subfamily. In terms of assembly, binds DNA as a homodimer. Can form a heterodimer with ER-beta.

The protein localises to the nucleus. Functionally, the steroid hormones and their receptors are involved in the regulation of eukaryotic gene expression and affect cellular proliferation and differentiation in target tissues. This Oreochromis aureus (Israeli tilapia) protein is Estrogen receptor (esr1).